The following is a 109-amino-acid chain: Putative double-stranded DNA mimic protein plu2488 (109 aa).

It belongs to the putative dsDNA mimic protein family.

In terms of biological role, may act as a double-stranded DNA (dsDNA) mimic. Probably regulates the activity of a dsDNA-binding protein. The protein is Putative double-stranded DNA mimic protein plu2488 of Photorhabdus laumondii subsp. laumondii (strain DSM 15139 / CIP 105565 / TT01) (Photorhabdus luminescens subsp. laumondii).